We begin with the raw amino-acid sequence, 123 residues long: Small ribosomal subunit protein uS12 (123 aa).

A 3-methylthioaspartic acid modification is found at aspartate 89.

This sequence belongs to the universal ribosomal protein uS12 family. Part of the 30S ribosomal subunit. Contacts proteins S8 and S17. May interact with IF1 in the 30S initiation complex.

Functionally, with S4 and S5 plays an important role in translational accuracy. Its function is as follows. Interacts with and stabilizes bases of the 16S rRNA that are involved in tRNA selection in the A site and with the mRNA backbone. Located at the interface of the 30S and 50S subunits, it traverses the body of the 30S subunit contacting proteins on the other side and probably holding the rRNA structure together. The combined cluster of proteins S8, S12 and S17 appears to hold together the shoulder and platform of the 30S subunit. This Desulfovibrio desulfuricans (strain ATCC 27774 / DSM 6949 / MB) protein is Small ribosomal subunit protein uS12.